A 415-amino-acid chain; its full sequence is Serine hydroxymethyltransferase (415 aa).

Residues leucine 120 and 124 to 126 (GHL) contribute to the (6S)-5,6,7,8-tetrahydrofolate site. Lysine 229 carries the N6-(pyridoxal phosphate)lysine modification.

The protein belongs to the SHMT family. As to quaternary structure, homodimer. It depends on pyridoxal 5'-phosphate as a cofactor.

It is found in the cytoplasm. The enzyme catalyses (6R)-5,10-methylene-5,6,7,8-tetrahydrofolate + glycine + H2O = (6S)-5,6,7,8-tetrahydrofolate + L-serine. It participates in one-carbon metabolism; tetrahydrofolate interconversion. Its pathway is amino-acid biosynthesis; glycine biosynthesis; glycine from L-serine: step 1/1. Catalyzes the reversible interconversion of serine and glycine with tetrahydrofolate (THF) serving as the one-carbon carrier. This reaction serves as the major source of one-carbon groups required for the biosynthesis of purines, thymidylate, methionine, and other important biomolecules. Also exhibits THF-independent aldolase activity toward beta-hydroxyamino acids, producing glycine and aldehydes, via a retro-aldol mechanism. The polypeptide is Serine hydroxymethyltransferase (Caldicellulosiruptor bescii (strain ATCC BAA-1888 / DSM 6725 / KCTC 15123 / Z-1320) (Anaerocellum thermophilum)).